Reading from the N-terminus, the 330-residue chain is Putative ADP-ribosyl glycohydrolase L543 (330 aa).

It belongs to the ADP-ribosylglycohydrolase family.

This Acanthamoeba polyphaga mimivirus (APMV) protein is Putative ADP-ribosyl glycohydrolase L543.